The sequence spans 203 residues: Holliday junction branch migration complex subunit RuvA (203 aa).

Residues 1 to 64 (MIGRLRGIVL…EDAQLLFGFN (64 aa)) form a domain I region. The tract at residues 65 to 142 (NKQERTLFRE…KGLHGDLFTP (78 aa)) is domain II. Residues 143-154 (AADLVLTSPASP) form a flexible linker region. A domain III region spans residues 155 to 203 (AVDDAEAEAVAALVSLGYKPQEASRMVSKVAQADASSETLIREALRAAL).

Belongs to the RuvA family. In terms of assembly, homotetramer. Forms an RuvA(8)-RuvB(12)-Holliday junction (HJ) complex. HJ DNA is sandwiched between 2 RuvA tetramers; dsDNA enters through RuvA and exits via RuvB. An RuvB hexamer assembles on each DNA strand where it exits the tetramer. Each RuvB hexamer is contacted by two RuvA subunits (via domain III) on 2 adjacent RuvB subunits; this complex drives branch migration. In the full resolvosome a probable DNA-RuvA(4)-RuvB(12)-RuvC(2) complex forms which resolves the HJ.

It localises to the cytoplasm. Functionally, the RuvA-RuvB-RuvC complex processes Holliday junction (HJ) DNA during genetic recombination and DNA repair, while the RuvA-RuvB complex plays an important role in the rescue of blocked DNA replication forks via replication fork reversal (RFR). RuvA specifically binds to HJ cruciform DNA, conferring on it an open structure. The RuvB hexamer acts as an ATP-dependent pump, pulling dsDNA into and through the RuvAB complex. HJ branch migration allows RuvC to scan DNA until it finds its consensus sequence, where it cleaves and resolves the cruciform DNA. This chain is Holliday junction branch migration complex subunit RuvA, found in Cronobacter sakazakii (strain ATCC BAA-894) (Enterobacter sakazakii).